Reading from the N-terminus, the 152-residue chain is Superoxide dismutase [Cu-Zn] (152 aa).

His-45, His-47, and His-62 together coordinate Cu cation. Cysteines 56 and 145 form a disulfide. Residues His-62, His-70, His-79, and Asp-82 each contribute to the Zn(2+) site. A Cu cation-binding site is contributed by His-119.

This sequence belongs to the Cu-Zn superoxide dismutase family. Homodimer. Cu cation is required as a cofactor. Zn(2+) serves as cofactor.

The protein resides in the cytoplasm. It carries out the reaction 2 superoxide + 2 H(+) = H2O2 + O2. Functionally, destroys radicals which are normally produced within the cells and which are toxic to biological systems. The protein is Superoxide dismutase [Cu-Zn] (SODCC) of Capsicum annuum (Capsicum pepper).